The sequence spans 538 residues: Putative outer membrane porin BglH (538 aa).

Positions 1-25 (MFRRNIITSAILLMAPLAFSAQSLA) are cleaved as a signal peptide.

This sequence belongs to the porin LamB (TC 1.B.3) family.

It localises to the cell outer membrane. Functionally, may be a sugar porin with a broad carbohydrate specificity. The chain is Putative outer membrane porin BglH (bglH) from Escherichia coli O6:H1 (strain CFT073 / ATCC 700928 / UPEC).